The following is a 142-amino-acid chain: Large ribosomal subunit protein uL11 (142 aa).

The protein belongs to the universal ribosomal protein uL11 family. Part of the ribosomal stalk of the 50S ribosomal subunit. Interacts with L10 and the large rRNA to form the base of the stalk. L10 forms an elongated spine to which L12 dimers bind in a sequential fashion forming a multimeric L10(L12)X complex. In terms of processing, one or more lysine residues are methylated.

In terms of biological role, forms part of the ribosomal stalk which helps the ribosome interact with GTP-bound translation factors. This is Large ribosomal subunit protein uL11 from Stenotrophomonas maltophilia (strain R551-3).